The primary structure comprises 322 residues: Ribonucleoside-diphosphate reductase small subunit (322 aa).

Fe cation contacts are provided by Asp-70, Glu-101, and His-104. Tyr-108 is a catalytic residue. Glu-163, Glu-197, and His-200 together coordinate Fe cation.

This sequence belongs to the ribonucleoside diphosphate reductase small chain family. Heterodimer of a large and a small subunit. It depends on Fe cation as a cofactor.

The enzyme catalyses a 2'-deoxyribonucleoside 5'-diphosphate + [thioredoxin]-disulfide + H2O = a ribonucleoside 5'-diphosphate + [thioredoxin]-dithiol. Provides the precursors necessary for DNA synthesis. Catalyzes the biosynthesis of deoxyribonucleotides from the corresponding ribonucleotides. This Plasmodium falciparum (isolate FCR-3 / Gambia) protein is Ribonucleoside-diphosphate reductase small subunit (RNR2).